The primary structure comprises 616 residues: Dihydroxy-acid dehydratase (616 aa).

Asp-81 lines the Mg(2+) pocket. Cys-122 is a binding site for [2Fe-2S] cluster. Mg(2+) is bound by residues Asp-123 and Lys-124. Lys-124 is subject to N6-carboxylysine. Cys-195 contacts [2Fe-2S] cluster. Glu-491 is a binding site for Mg(2+). Ser-517 (proton acceptor) is an active-site residue.

The protein belongs to the IlvD/Edd family. As to quaternary structure, homodimer. Requires [2Fe-2S] cluster as cofactor. It depends on Mg(2+) as a cofactor.

The catalysed reaction is (2R)-2,3-dihydroxy-3-methylbutanoate = 3-methyl-2-oxobutanoate + H2O. The enzyme catalyses (2R,3R)-2,3-dihydroxy-3-methylpentanoate = (S)-3-methyl-2-oxopentanoate + H2O. Its pathway is amino-acid biosynthesis; L-isoleucine biosynthesis; L-isoleucine from 2-oxobutanoate: step 3/4. It functions in the pathway amino-acid biosynthesis; L-valine biosynthesis; L-valine from pyruvate: step 3/4. Its function is as follows. Functions in the biosynthesis of branched-chain amino acids. Catalyzes the dehydration of (2R,3R)-2,3-dihydroxy-3-methylpentanoate (2,3-dihydroxy-3-methylvalerate) into 2-oxo-3-methylpentanoate (2-oxo-3-methylvalerate) and of (2R)-2,3-dihydroxy-3-methylbutanoate (2,3-dihydroxyisovalerate) into 2-oxo-3-methylbutanoate (2-oxoisovalerate), the penultimate precursor to L-isoleucine and L-valine, respectively. The protein is Dihydroxy-acid dehydratase of Escherichia coli O1:K1 / APEC.